Consider the following 607-residue polypeptide: Fatty acid amide hydrolase (607 aa).

Residues lysine 204 and serine 280 each act as charge relay system in the active site. A substrate-binding site is contributed by 301–304; it reads GGGS. Serine 304 serves as the catalytic Acyl-ester intermediate.

Belongs to the amidase family. Forms homodimers.

It localises to the endoplasmic reticulum membrane. The protein resides in the cell membrane. The catalysed reaction is N-(9Z,12Z-octadecadienoyl)-ethanolamine + H2O = ethanolamine + (9Z,12Z)-octadecadienoate. In terms of biological role, catalyzes the hydrolysis of bioactive endogenous fatty acid amides to their corresponding acids. The hydrolysis of endogenous amidated lipids terminates their participation as lipid mediators in various signaling systems. Converts a wide range of N-acylethanolamines (NAEs) to their corresponding free fatty acids and ethanolamine. In Medicago truncatula (Barrel medic), this protein is Fatty acid amide hydrolase.